Reading from the N-terminus, the 482-residue chain is Cysteine--tRNA ligase (482 aa).

A Zn(2+)-binding site is contributed by cysteine 29. Positions 31 to 41 match the 'HIGH' region motif; sequence PTVYDFAHIGN. Residues cysteine 224, histidine 249, and glutamate 253 each coordinate Zn(2+). A 'KMSKS' region motif is present at residues 282–286; the sequence is KMSKS. Lysine 285 serves as a coordination point for ATP.

Belongs to the class-I aminoacyl-tRNA synthetase family. As to quaternary structure, monomer. The cofactor is Zn(2+).

It is found in the cytoplasm. The enzyme catalyses tRNA(Cys) + L-cysteine + ATP = L-cysteinyl-tRNA(Cys) + AMP + diphosphate. This chain is Cysteine--tRNA ligase, found in Nitrobacter hamburgensis (strain DSM 10229 / NCIMB 13809 / X14).